The primary structure comprises 341 residues: MRIALDASGGDFGYQPNILGAARAVKELKCEVILVGDEKVLKEQLASLGLSDLKGLSVEHAPDVIDMDADPAKEVRSKKNASVVVAADLVKQGRAKAFVSAGNSGATMVAALMKMGRIEGVLRPAIGAPLPTVKGLMLLLDAGANAECKPQHLMQFAVMGSIYTQKVFGIRKPKVGLLSIGEEEGKGNDLVKETYPYLSNLGINFCGNVEGRDLPFGTTDVVVTDGFTGNVCLKLEEGLAKAMFHMIKGEIKKNPIAMLGAMLAKPAFASVKKITDPDTAGGAPLLGVDGVAIVSHGKSSETAVFNAVRTAKRLVDSGFVSDIKQHIAEYKEIFEKLEAKK.

This sequence belongs to the PlsX family. Homodimer. Probably interacts with PlsY.

The protein resides in the cytoplasm. It carries out the reaction a fatty acyl-[ACP] + phosphate = an acyl phosphate + holo-[ACP]. The protein operates within lipid metabolism; phospholipid metabolism. Its function is as follows. Catalyzes the reversible formation of acyl-phosphate (acyl-PO(4)) from acyl-[acyl-carrier-protein] (acyl-ACP). This enzyme utilizes acyl-ACP as fatty acyl donor, but not acyl-CoA. The sequence is that of Phosphate acyltransferase from Elusimicrobium minutum (strain Pei191).